Reading from the N-terminus, the 199-residue chain is MAKVLVLYYSAYGHIEAMANAVAEGAREAGAQVDIKRVPELVPPDVAKASHYKLDQAAPVATIEDLANYDAIVIGTGTRFGRMASQMSNFLDQAGGLWARGALNGKVGGAFTSTATQHGGQETTLFSIITNLLHFGMVVVGLNYGFGDQMRLDQVTGGAPYGATTITGGDGSRQPSETELAGARYQGKTIAETAIKLHG.

One can recognise a Flavodoxin-like domain in the interval 4 to 190; it reads VLVLYYSAYG…AGARYQGKTI (187 aa). FMN is bound by residues 10-15 and 78-80; these read SAYGHI and TRF. Y12 is a binding site for NAD(+). Position 98 (W98) interacts with substrate. FMN-binding positions include 113 to 119 and H134; that span reads STATQHG.

The protein belongs to the WrbA family. FMN serves as cofactor.

It carries out the reaction a quinone + NADH + H(+) = a quinol + NAD(+). The enzyme catalyses a quinone + NADPH + H(+) = a quinol + NADP(+). The polypeptide is NAD(P)H dehydrogenase (quinone) (Rhodopseudomonas palustris (strain TIE-1)).